Reading from the N-terminus, the 259-residue chain is Ubiquitin-conjugating enzyme E2 J2 (259 aa).

The Cytoplasmic segment spans residues 1 to 226 (MSSTSSKRAP…AGLQQANRHH (226 aa)). Residues 12-162 (TATQRLKQDY…DKVFCELFPE (151 aa)) form the UBC core domain. C94 (glycyl thioester intermediate) is an active-site residue. The chain crosses the membrane as a helical; Anchor for type IV membrane protein span at residues 227–247 (GLLGGALANLFVIVGFAAFAY). Topologically, residues 248–259 (TVKYVLRSIAQE) are lumenal.

Belongs to the ubiquitin-conjugating enzyme family. Post-translationally, auto-ubiquitinated.

It is found in the endoplasmic reticulum membrane. The catalysed reaction is S-ubiquitinyl-[E1 ubiquitin-activating enzyme]-L-cysteine + [E2 ubiquitin-conjugating enzyme]-L-cysteine = [E1 ubiquitin-activating enzyme]-L-cysteine + S-ubiquitinyl-[E2 ubiquitin-conjugating enzyme]-L-cysteine.. It functions in the pathway protein modification; protein ubiquitination. Catalyzes the covalent attachment of ubiquitin to other proteins. Seems to function in the selective degradation of misfolded membrane proteins from the endoplasmic reticulum (ERAD). In cooperation with the GATOR2 complex, catalyzes 'Lys-6'-linked ubiquitination of NPRL2. The sequence is that of Ubiquitin-conjugating enzyme E2 J2 (UBE2J2) from Homo sapiens (Human).